The chain runs to 301 residues: Sulfate adenylyltransferase subunit 2 2 (301 aa).

This sequence belongs to the PAPS reductase family. CysD subfamily. Heterodimer composed of CysD, the smaller subunit, and CysN.

The catalysed reaction is sulfate + ATP + H(+) = adenosine 5'-phosphosulfate + diphosphate. It functions in the pathway sulfur metabolism; hydrogen sulfide biosynthesis; sulfite from sulfate: step 1/3. With CysN forms the ATP sulfurylase (ATPS) that catalyzes the adenylation of sulfate producing adenosine 5'-phosphosulfate (APS) and diphosphate, the first enzymatic step in sulfur assimilation pathway. APS synthesis involves the formation of a high-energy phosphoric-sulfuric acid anhydride bond driven by GTP hydrolysis by CysN coupled to ATP hydrolysis by CysD. This is Sulfate adenylyltransferase subunit 2 2 from Shewanella sediminis (strain HAW-EB3).